The following is a 251-amino-acid chain: Pyrroloquinoline-quinone synthase (251 aa).

Belongs to the PqqC family.

The catalysed reaction is 6-(2-amino-2-carboxyethyl)-7,8-dioxo-1,2,3,4,7,8-hexahydroquinoline-2,4-dicarboxylate + 3 O2 = pyrroloquinoline quinone + 2 H2O2 + 2 H2O + H(+). It participates in cofactor biosynthesis; pyrroloquinoline quinone biosynthesis. Its function is as follows. Ring cyclization and eight-electron oxidation of 3a-(2-amino-2-carboxyethyl)-4,5-dioxo-4,5,6,7,8,9-hexahydroquinoline-7,9-dicarboxylic-acid to PQQ. The polypeptide is Pyrroloquinoline-quinone synthase (Klebsiella pneumoniae subsp. pneumoniae (strain ATCC 700721 / MGH 78578)).